Here is a 635-residue protein sequence, read N- to C-terminus: Allantoin permease (635 aa).

Over 1-144 (MANDALSAIF…AGTGLQLGLN (144 aa)) the chain is Cytoplasmic. Residues 145–165 (WWQCWLTVWIGYTFAGIFVVL) form a helical membrane-spanning segment. Over 166 to 174 (NSRFGSAYH) the chain is Extracellular. Residues 175–195 (LSFPITVRASFGIFFSMWPII) form a helical membrane-spanning segment. Residues 196–198 (NRV) lie on the Cytoplasmic side of the membrane. Residues 199–219 (VMAIVWYAVQAWLGATPVALM) traverse the membrane as a helical segment. The Extracellular segment spans residues 220–243 (LKSIFGKNLEDRIPNHFGSPNSTT). A helical transmembrane segment spans residues 244–264 (FEFMCFFIFWVVSIPFVLVAP). Residues 265-269 (HKIRH) lie on the Cytoplasmic side of the membrane. The helical transmembrane segment at 270 to 290 (LFTVKAALIPFAAFGFLIWAL) threads the bilayer. Over 291–311 (KKSHGKIELGTLNDYSPHGSE) the chain is Extracellular. Residues 312 to 332 (FSWIFVRSLMACVANFAALII) traverse the membrane as a helical segment. Topologically, residues 333-351 (NAPDFGRFAKNPQASLWPQ) are cytoplasmic. A helical transmembrane segment spans residues 352 to 372 (LVAIPLFFAITCLIGIIVTAA). The Extracellular portion of the chain corresponds to 373-401 (GYHLYGVNYWSPLDVLGQFLETTYTRGTR). A helical membrane pass occupies residues 402 to 422 (AGVFLISFVFALAQLGTNISA). The Cytoplasmic segment spans residues 423-443 (NSLACGADMTALFPRYINIRR). A helical membrane pass occupies residues 444–464 (GSLFCVAMALCICPWNLMASS). Topologically, residues 465–466 (SK) are extracellular. The helical transmembrane segment at 467-487 (FTSALGAYAIFLSSIAGVICA) threads the bilayer. At 488 to 522 (DYFVVRRGYVKLTHLFLAQKGSFYMFGNKFGANWR) the chain is on the cytoplasmic side. A helical membrane pass occupies residues 523–543 (AFVAYICGIAPNLPGFIGDVG). At 544–560 (APKITVSEGAMRLYYLG) the chain is on the extracellular side. A helical membrane pass occupies residues 561-581 (YPVGFFISAVIYLILCYFFPV). Residues 582 to 635 (PGTPVTNFLTEKGWFQRWAYVEDFEQDWKNELRRDDLCDDTVSIYDGTEEKIVY) are Cytoplasmic-facing.

It belongs to the purine-cytosine permease (2.A.39) family.

It localises to the membrane. Its function is as follows. Transport of allantoin. This chain is Allantoin permease (DAL4), found in Saccharomyces cerevisiae (strain ATCC 204508 / S288c) (Baker's yeast).